Consider the following 308-residue polypeptide: Ribosomal RNA large subunit methyltransferase F (308 aa).

This sequence belongs to the methyltransferase superfamily. METTL16/RlmF family.

It is found in the cytoplasm. The catalysed reaction is adenosine(1618) in 23S rRNA + S-adenosyl-L-methionine = N(6)-methyladenosine(1618) in 23S rRNA + S-adenosyl-L-homocysteine + H(+). Functionally, specifically methylates the adenine in position 1618 of 23S rRNA. This Escherichia coli O17:K52:H18 (strain UMN026 / ExPEC) protein is Ribosomal RNA large subunit methyltransferase F.